The chain runs to 363 residues: MTQLKKTSVRKELRTEQPSIYSFELDEIKQWLTENGEKPFRAAQIFEWLYEKRVSSFDEMTNLSKSLREKLESNFVLTTLKTAVKQTSQDGTMKFLFELHDGYTIETVLMRHEYGNSVCVTTQVGCRIGCTFCASTLGGLKRNLEAGEIVAQVVKVQKALDETDERVSSVVIMGIGEPFDNFNEMLAFLKIINHDKGLNIGARHITVSTSGIIPKIYDFADQKMQINFAISLHAPNTEIRSRLMPINKAYKLPDLMEAVKYYIEKTGRRISFEYGLFGGVNDQVEHAEELAELLKDVKCHVNLIPVNYVPERDYVRTPRDQIFAFEKTLKSRGVNVTIRREQGHDIDAACGQLRAKERQDETR.

Residue E106 is the Proton acceptor of the active site. Residues 112 to 345 (HEYGNSVCVT…VTIRREQGHD (234 aa)) enclose the Radical SAM core domain. A disulfide bridge connects residues C119 and C350. The [4Fe-4S] cluster site is built by C126, C130, and C133. Residues 176 to 177 (GE), S208, 231 to 233 (SLH), and N307 each bind S-adenosyl-L-methionine. The active-site S-methylcysteine intermediate is the C350.

Belongs to the radical SAM superfamily. RlmN family. The cofactor is [4Fe-4S] cluster.

Its subcellular location is the cytoplasm. It catalyses the reaction adenosine(2503) in 23S rRNA + 2 reduced [2Fe-2S]-[ferredoxin] + 2 S-adenosyl-L-methionine = 2-methyladenosine(2503) in 23S rRNA + 5'-deoxyadenosine + L-methionine + 2 oxidized [2Fe-2S]-[ferredoxin] + S-adenosyl-L-homocysteine. It carries out the reaction adenosine(37) in tRNA + 2 reduced [2Fe-2S]-[ferredoxin] + 2 S-adenosyl-L-methionine = 2-methyladenosine(37) in tRNA + 5'-deoxyadenosine + L-methionine + 2 oxidized [2Fe-2S]-[ferredoxin] + S-adenosyl-L-homocysteine. Functionally, specifically methylates position 2 of adenine 2503 in 23S rRNA and position 2 of adenine 37 in tRNAs. The chain is Probable dual-specificity RNA methyltransferase RlmN from Bacillus velezensis (strain DSM 23117 / BGSC 10A6 / LMG 26770 / FZB42) (Bacillus amyloliquefaciens subsp. plantarum).